We begin with the raw amino-acid sequence, 365 residues long: 3-galactosyl-N-acetylglucosaminide 4-alpha-L-fucosyltransferase FUT3 (365 aa).

Residues 1–15 (MYPPGCAKVKCSWHH) lie on the Cytoplasmic side of the membrane. Residues 16 to 34 (CLPGLLLQLLLALCFFSYL) traverse the membrane as a helical; Signal-anchor for type II membrane protein segment. Residues 35-365 (RMSQEKPKPK…TVPSIASWFQ (331 aa)) are Lumenal-facing. 3 N-linked (GlcNAc...) asparagine glycosylation sites follow: N100, N158, and N189.

Belongs to the glycosyltransferase 10 family. Glycosylated. Liver, kidney, lung and brain.

Its subcellular location is the golgi apparatus. It is found in the golgi stack membrane. It catalyses the reaction a beta-D-galactosyl-(1-&gt;3)-N-acetyl-beta-D-glucosaminyl derivative + GDP-beta-L-fucose = a beta-D-galactosyl-(1-&gt;3)-[alpha-L-fucosyl-(1-&gt;4)]-N-acetyl-beta-D-glucosaminyl derivative + GDP + H(+). The enzyme catalyses an N-acetyl-alpha-neuraminyl-(2-&gt;3)-beta-D-galactosyl-(1-&gt;4)-N-acetyl-beta-D-glucosaminyl derivative + GDP-beta-L-fucose = an alpha-Neu5Ac-(2-&gt;3)-beta-D-Gal-(1-&gt;4)-[alpha-L-Fuc-(1-&gt;3)]-beta-D-GlcNAc derivative + GDP + H(+). The catalysed reaction is a beta-D-galactosyl-(1-&gt;4)-N-acetyl-beta-D-glucosaminyl derivative + GDP-beta-L-fucose = a beta-D-galactosyl-(1-&gt;4)-[alpha-L-fucosyl-(1-&gt;3)]-N-acetyl-beta-D-glucosaminyl derivative + GDP + H(+). It carries out the reaction an alpha-Neu5Ac-(2-&gt;3)-beta-D-Gal-(1-&gt;4)-beta-D-GlcNAc-(1-&gt;3)-beta-D-Gal-(1-&gt;4)-[alpha-L-Fuc-(1-&gt;3)]-beta-D-GlcNAc derivative + GDP-beta-L-fucose = an alpha-Neu5Ac-(2-&gt;3)-beta-D-Gal-(1-&gt;4)-[alpha-L-Fuc-(1-&gt;3)]-beta-D-GlcNAc-(1-&gt;3)-beta-D-Gal-(1-&gt;4)-[alpha-L-Fuc-(1-&gt;3)]-beta-D-GlcNAc derivative + GDP + H(+). It catalyses the reaction Lc4Cer + GDP-beta-L-fucose = a lactoside III(4)-a-Fuc-Lc4Cer + GDP + H(+). The enzyme catalyses a beta-D-Gal-(1-&gt;3)-beta-D-GlcNAc-(1-&gt;3)-beta-D-Gal-(1-&gt;4)-beta-D-Glc-(1&lt;-&gt;1')-Cer(d18:1(4E)) + GDP-beta-L-fucose = a III(4)-a-Fuc-Lc4Cer(d18:1(4E)) + GDP + H(+). The catalysed reaction is N-acetyl-alpha-neuraminosyl-(2-&gt;3)-beta-D-galactosyl-(1-&gt;3)-[N-acetyl-alpha-neuraminosyl-(2-&gt;6)]-N-acetyl-beta-D-glucosaminyl-(1-&gt;3)-beta-D-galactosyl-(1-&gt;4)-beta-D-glucosyl-(1&lt;-&gt;1')-N-acyl-sphing-4-enine + GDP-beta-L-fucose = N-acetyl-alpha-neuraminosyl-(2-&gt;3)-beta-D-galactosyl-(1-&gt;3)-alpha-L-fucosyl-(1-&gt;4)-[N-acetyl-alpha-neuraminosyl-(2-&gt;6)-N-acetyl-beta-D-glucosaminyl-(1-&gt;3)]-beta-D-galactosyl-(1-&gt;4)-beta-D-glucosyl-(1&lt;-&gt;1')-N-acyl-sphing-4-enine + GDP + H(+). It carries out the reaction N-acetyl-alpha-neuraminosyl-(2-&gt;3)-beta-D-galactosyl-(1-&gt;3)-N-acetyl-beta-D-glucosaminyl-(1-&gt;3)-beta-D-galactosyl-(1-&gt;4)-beta-D-glucosyl-(1&lt;-&gt;1')-N-acyl-sphing-4-enine + GDP-beta-L-fucose = N-acetyl-alpha-neuraminosyl-(2-&gt;3)-beta-D-galactosyl-(1-&gt;3)-alpha-L-fucosyl-(1-&gt;4)-[N-acetyl-beta-D-glucosaminyl-(1-&gt;3)]-beta-D-galactosyl-(1-&gt;4)-beta-D-glucosyl-(1&lt;-&gt;1')-N-acyl-sphing-4-enine + GDP + H(+). It catalyses the reaction beta-D-galactosyl-(1-&gt;3)-N-acetyl-D-glucosamine + GDP-beta-L-fucose = beta-D-galactosyl-(1-&gt;3)-[alpha-L-fucosyl-(1-&gt;4)]-N-acetyl-D-glucosamine + GDP + H(+). The enzyme catalyses alpha-L-Fuc-(1-&gt;2)-beta-D-Gal-(1-&gt;3)-D-GlcNAc + GDP-beta-L-fucose = alpha-L-Fuc-(1-&gt;2)-beta-D-Gal-(1-&gt;3)-[alpha-L-Fuc-(1-&gt;4)]-D-GlcNAc + GDP + H(+). The catalysed reaction is alpha-L-Fuc-(1-&gt;2)-beta-D-Gal-(1-&gt;4)-D-GlcNAc + GDP-beta-L-fucose = alpha-L-Fuc-(1-&gt;2)-beta-D-Gal-(1-&gt;4)-[alpha-L-Fuc-(1-&gt;3)]-D-GlcNAc + GDP + H(+). It carries out the reaction beta-D-galactosyl-(1-&gt;4)-N-acetyl-D-glucosamine + GDP-beta-L-fucose = beta-D-galactosyl-(1-&gt;4)-[alpha-L-fucosyl-(1-&gt;3)]-N-acetyl-D-glucosamine + GDP + H(+). It catalyses the reaction lactose + GDP-beta-L-fucose = beta-D-galactosyl-(1-&gt;4)-[alpha-L-fucosyl-(1-&gt;3)]-D-glucose + GDP + H(+). The enzyme catalyses an alpha-Neu5Ac-(2-&gt;3)-beta-D-Gal-(1-&gt;3)-D-GlcNAc derivative + GDP-beta-L-fucose = an alpha-Neu5Ac-(2-&gt;3)-beta-D-Gal-(1-&gt;3)-[alpha-L-Fuc-(1-&gt;4)]-beta-D-GlcNAc derivative + GDP + H(+). The protein operates within protein modification; protein glycosylation. Its function is as follows. Catalyzes the transfer of L-fucose, from a guanosine diphosphate-beta-L-fucose, to both the subterminal N-acetyl glucosamine (GlcNAc) of type 1 chain (beta-D-Gal-(1-&gt;3)-beta-D-GlcNAc) glycolipids and oligosaccharides via an alpha(1,4) linkage, and the subterminal glucose (Glc) or GlcNAc of type 2 chain (beta-D-Gal-(1-&gt;4)-beta-D-GlcNAc) oligosaccharides via an alpha(1,3) linkage, independently of the presence of terminal alpha-L-fucosyl-(1,2) moieties on the terminal galactose of these acceptors and participates in the blood groups Lewis determination and expression of Lewis a (Le(a)), lewis b (Le(b)), Lewis x/SSEA-1 (Le(x)) and lewis y (Le(y)) antigens. Also catalyzes the transfer of L-fucose to subterminal GlcNAc of sialyl- and disialyl-lactotetraosylceramide to produce sialyl Lewis a (sLe(a)) and disialyl Lewis a via an alpha(1,4) linkage and therefore may regulate cell surface sialyl Lewis a expression and consequently regulates adhesive properties to E-selectin, cell proliferation and migration. Catalyzes the transfer of an L-fucose to 3'-sialyl-N-acetyllactosamine by an alpha(1,3) linkage, which allows the formation of sialyl-Lewis x structure and therefore may regulate the sialyl-Lewis x surface antigen expression and consequently adhesive properties to E-selectin. Prefers type 1 chain over type 2 acceptors. Type 1 tetrasaccharide is a better acceptor than type 1 disaccharide suggesting that a beta anomeric configuration of GlcNAc in the substrate is preferred. Lewis-positive (Le(+)) individuals have an active enzyme while Lewis-negative (Le(-)) individuals have an inactive enzyme. This Bos taurus (Bovine) protein is 3-galactosyl-N-acetylglucosaminide 4-alpha-L-fucosyltransferase FUT3.